Consider the following 430-residue polypeptide: UPF0597 protein Clos_2050 (430 aa).

This sequence belongs to the UPF0597 family.

This Alkaliphilus oremlandii (strain OhILAs) (Clostridium oremlandii (strain OhILAs)) protein is UPF0597 protein Clos_2050.